A 183-amino-acid polypeptide reads, in one-letter code: ER membrane protein complex subunit 4 (183 aa).

N-acetylthreonine is present on Thr-2. Residues 2–66 (TAQGGLVANR…VQETDRILVE (65 aa)) lie on the Cytoplasmic side of the membrane. A disordered region spans residues 20–39 (ELSGPGGGSRGRSDRGSGQG). Phosphoserine is present on Ser-36. Residues 67–87 (KRCWDIALGPLKQIPMNLFIM) traverse the membrane as a helical segment. Over 88–98 (YMAGNTISIFP) the chain is Lumenal. A helical membrane pass occupies residues 99–120 (TMMVCMMAWRPIQALMAISATF). The Cytoplasmic segment spans residues 121–127 (KMLESSS). A helical membrane pass occupies residues 128–148 (QKFLQGLVYLIGNLMGLALAV). Over 149–183 (YKCQSMGLLPTHASDWLAFIEPPERMEFSGGGLLL) the chain is Lumenal.

It belongs to the EMC4 family. In terms of assembly, component of the ER membrane protein complex (EMC). In terms of tissue distribution, isoform 1 is expressed in brain and heart. Isoform 2 is expressed in heart.

The protein localises to the endoplasmic reticulum membrane. In terms of biological role, part of the endoplasmic reticulum membrane protein complex (EMC) that enables the energy-independent insertion into endoplasmic reticulum membranes of newly synthesized membrane proteins. Preferentially accommodates proteins with transmembrane domains that are weakly hydrophobic or contain destabilizing features such as charged and aromatic residues. Involved in the cotranslational insertion of multi-pass membrane proteins in which stop-transfer membrane-anchor sequences become ER membrane spanning helices. It is also required for the post-translational insertion of tail-anchored/TA proteins in endoplasmic reticulum membranes. By mediating the proper cotranslational insertion of N-terminal transmembrane domains in an N-exo topology, with translocated N-terminus in the lumen of the ER, controls the topology of multi-pass membrane proteins like the G protein-coupled receptors. By regulating the insertion of various proteins in membranes, it is indirectly involved in many cellular processes. The sequence is that of ER membrane protein complex subunit 4 (EMC4) from Homo sapiens (Human).